The following is a 761-amino-acid chain: Elongation factor G, mitochondrial (761 aa).

Residues 1 to 33 (MTSVLRGVLKTHLPRTLTLPRCARNFQTTTFLR) constitute a mitochondrion transit peptide. Residues 66-347 (TRLRNIGISA…SVVDYLPQPN (282 aa)) enclose the tr-type G domain. GTP is bound by residues 75 to 82 (AHIDSGKT), 146 to 150 (DTPGH), and 200 to 203 (NKMD).

It belongs to the TRAFAC class translation factor GTPase superfamily. Classic translation factor GTPase family. EF-G/EF-2 subfamily.

It is found in the mitochondrion. It functions in the pathway protein biosynthesis; polypeptide chain elongation. Functionally, mitochondrial GTPase that catalyzes the GTP-dependent ribosomal translocation step during translation elongation. During this step, the ribosome changes from the pre-translocational (PRE) to the post-translocational (POST) state as the newly formed A-site-bound peptidyl-tRNA and P-site-bound deacylated tRNA move to the P and E sites, respectively. Catalyzes the coordinated movement of the two tRNA molecules, the mRNA and conformational changes in the ribosome. The protein is Elongation factor G, mitochondrial of Candida dubliniensis (strain CD36 / ATCC MYA-646 / CBS 7987 / NCPF 3949 / NRRL Y-17841) (Yeast).